Reading from the N-terminus, the 160-residue chain is Lymphocyte antigen 96 (160 aa).

Positions 1–16 (MLPFILFSTLLPLIFT) are cleaved as a signal peptide. Intrachain disulfides connect Cys-25/Cys-51, Cys-37/Cys-148, and Cys-95/Cys-105. Residues Asn-26, Asn-77, and Asn-101 are each glycosylated (N-linked (GlcNAc...) asparagine). The tract at residues 119–123 (FSFKG) is interaction with lipopolysaccharide. Asn-150 carries an N-linked (GlcNAc...) asparagine glycan.

As to quaternary structure, heterogeneous homomer formed from homodimers; disulfide-linked. Belongs to the lipopolysaccharide (LPS) receptor, a multi-protein complex containing at least CD14, LY96 and TLR4. Binds to the extracellular domains of TLR2 and TLR4. Ligand binding induces interaction with TLR4 and oligomerization of the complex. N-glycosylated.

The protein resides in the secreted. Its subcellular location is the extracellular space. In terms of biological role, binds bacterial lipopolysaccharide (LPS). Cooperates with TLR4 in the innate immune response to bacterial lipopolysaccharide (LPS), and with TLR2 in the response to cell wall components from Gram-positive and Gram-negative bacteria. Enhances TLR4-dependent activation of NF-kappa-B. Cells expressing both LY96 and TLR4, but not TLR4 alone, respond to LPS. This Cricetulus griseus (Chinese hamster) protein is Lymphocyte antigen 96 (LY96).